The following is a 287-amino-acid chain: Elongation factor Ts (287 aa).

Positions 77–80 (TDFV) are involved in Mg(2+) ion dislocation from EF-Tu.

The protein belongs to the EF-Ts family.

The protein resides in the cytoplasm. Associates with the EF-Tu.GDP complex and induces the exchange of GDP to GTP. It remains bound to the aminoacyl-tRNA.EF-Tu.GTP complex up to the GTP hydrolysis stage on the ribosome. The chain is Elongation factor Ts from Wolbachia sp. subsp. Brugia malayi (strain TRS).